The sequence spans 239 residues: ATP synthase subunit a (239 aa).

The next 5 membrane-spanning stretches (helical) occupy residues 13–33 (IWFD…VFAF), 75–95 (FHLM…LGLV), 113–133 (DPIV…FFGM), 174–194 (GNIF…ASVG), and 208–230 (WVAF…SMVY).

The protein belongs to the ATPase A chain family. F-type ATPases have 2 components, CF(1) - the catalytic core - and CF(0) - the membrane proton channel. CF(1) has five subunits: alpha(3), beta(3), gamma(1), delta(1), epsilon(1). CF(0) has three main subunits: a(1), b(2) and c(9-12). The alpha and beta chains form an alternating ring which encloses part of the gamma chain. CF(1) is attached to CF(0) by a central stalk formed by the gamma and epsilon chains, while a peripheral stalk is formed by the delta and b chains.

It localises to the cell membrane. Functionally, key component of the proton channel; it plays a direct role in the translocation of protons across the membrane. This chain is ATP synthase subunit a, found in Enterococcus faecalis (strain ATCC 700802 / V583).